A 335-amino-acid chain; its full sequence is Anthranilate phosphoribosyltransferase (335 aa).

Residues glycine 79, 82–83, threonine 87, 89–92, 107–115, and serine 119 contribute to the 5-phospho-alpha-D-ribose 1-diphosphate site; these read GD, NIST, and KHGSRSVSS. Glycine 79 contacts anthranilate. A Mg(2+)-binding site is contributed by serine 91. Arginine 165 is an anthranilate binding site. Mg(2+) contacts are provided by aspartate 223 and glutamate 224.

The protein belongs to the anthranilate phosphoribosyltransferase family. As to quaternary structure, homodimer. It depends on Mg(2+) as a cofactor.

The catalysed reaction is N-(5-phospho-beta-D-ribosyl)anthranilate + diphosphate = 5-phospho-alpha-D-ribose 1-diphosphate + anthranilate. Its pathway is amino-acid biosynthesis; L-tryptophan biosynthesis; L-tryptophan from chorismate: step 2/5. Catalyzes the transfer of the phosphoribosyl group of 5-phosphorylribose-1-pyrophosphate (PRPP) to anthranilate to yield N-(5'-phosphoribosyl)-anthranilate (PRA). The chain is Anthranilate phosphoribosyltransferase from Helicobacter pylori (strain Shi470).